A 507-amino-acid chain; its full sequence is Maturase K (507 aa).

Belongs to the intron maturase 2 family. MatK subfamily.

The protein resides in the plastid. It localises to the chloroplast. In terms of biological role, usually encoded in the trnK tRNA gene intron. Probably assists in splicing its own and other chloroplast group II introns. The protein is Maturase K of Browningia hertlingiana (Cactus).